A 1018-amino-acid chain; its full sequence is Collagen, type I, alpha 1a (1018 aa).

Residues Gln1 to Ser10 are compositionally biased toward basic and acidic residues. The interval Gln1–Gln991 is disordered. A compositionally biased stretch (pro residues) spans Met13–Ser30. A compositionally biased stretch (low complexity) spans Pro31–Arg58. Over residues Asn67–Glu81 the composition is skewed to basic and acidic residues. The span at Pro126–Ala136 shows a compositional bias: low complexity. Residues Pro138 to Pro151 are compositionally biased toward pro residues. Positions Gly152–Gly170 are enriched in gly residues. Composition is skewed to low complexity over residues Pro171–Pro214 and Ser223–Val261. Residues Gly284–Gly296 show a composition bias toward gly residues. 4 stretches are compositionally biased toward low complexity: residues Val370 to Lys385, Ala424 to Gln442, Leu452 to Pro510, and Arg543 to Thr558. Positions Gly568 to Gly577 are enriched in gly residues. Low complexity-rich tracts occupy residues Ala591–Thr627 and Pro641–Val663. Residues Pro665–Pro677 show a composition bias toward pro residues. Low complexity-rich tracts occupy residues Glu701–Gly746 and Pro775–Ser795. Over residues Ala819 to Val829 the composition is skewed to pro residues. Positions Pro843–Pro862 are enriched in low complexity. The span at Arg865–Glu876 shows a compositional bias: basic and acidic residues. The span at Ser889–Pro925 shows a compositional bias: low complexity. In terms of domain architecture, Fibrillar collagen NC1 spans Gly932 to Lys1018. Positions Lys948–Glu959 are enriched in basic and acidic residues. Positions Thr963–Gln973 are enriched in polar residues.

This sequence belongs to the fibrillar collagen family.

The protein localises to the secreted. It is found in the extracellular space. Its subcellular location is the extracellular matrix. In Epinephelus costae (Goldblotch grouper), this protein is Collagen, type I, alpha 1a.